Here is a 426-residue protein sequence, read N- to C-terminus: MKLRRSVEKLKGTIRVPGDKSISHRSIIFGSLAKGVTRFHNILRGEDVLSTMQVFRDLGVKIEDNGDIVEVHGVGFDGLQAPKNDLDMGNSGTSIRLISGVLAGQDFEATMFGDDSLSKRPMDRVTIPLSQMGLKISGQTERDLPPLTIKGNKNLKPIRYQLPVASAQVKSALIFAALQAEGNSVIVKKDLTRNHTEDMIVQFGGQLKFNGKEIRIQGGQEFIAQEITVPGDISSAAFWLVAGLIIPGSKIVLENVGINETRTGILDVIKAMGGKMTLSNIDELAKSATITVETSELKATEIAGELIPRLIDELPIITLLATQAHGTTIICDAEELKVKETDCIQVVADALNSMGATIEPTEDGMIIHGPTALHGAEINTFGDHRIGMMTAIAALLAKDGEVVLERAEAINTSYPAFFEHLNSLMD.

Residues K20, S21, and R25 each coordinate 3-phosphoshikimate. Residue K20 coordinates phosphoenolpyruvate. Phosphoenolpyruvate is bound by residues G92 and R120. 4 residues coordinate 3-phosphoshikimate: S166, Q168, D312, and K339. A phosphoenolpyruvate-binding site is contributed by Q168. D312 functions as the Proton acceptor in the catalytic mechanism. R385 contacts phosphoenolpyruvate.

It belongs to the EPSP synthase family. As to quaternary structure, monomer.

Its subcellular location is the cytoplasm. The enzyme catalyses 3-phosphoshikimate + phosphoenolpyruvate = 5-O-(1-carboxyvinyl)-3-phosphoshikimate + phosphate. It participates in metabolic intermediate biosynthesis; chorismate biosynthesis; chorismate from D-erythrose 4-phosphate and phosphoenolpyruvate: step 6/7. Its function is as follows. Catalyzes the transfer of the enolpyruvyl moiety of phosphoenolpyruvate (PEP) to the 5-hydroxyl of shikimate-3-phosphate (S3P) to produce enolpyruvyl shikimate-3-phosphate and inorganic phosphate. The sequence is that of 3-phosphoshikimate 1-carboxyvinyltransferase from Streptococcus suis (strain 98HAH33).